A 385-amino-acid polypeptide reads, in one-letter code: Arginine biosynthesis bifunctional protein ArgJ (385 aa).

Substrate is bound by residues threonine 142, lysine 168, threonine 179, glutamate 259, asparagine 380, and threonine 385. Threonine 179 serves as the catalytic Nucleophile.

This sequence belongs to the ArgJ family. As to quaternary structure, heterotetramer of two alpha and two beta chains.

Its subcellular location is the cytoplasm. The enzyme catalyses N(2)-acetyl-L-ornithine + L-glutamate = N-acetyl-L-glutamate + L-ornithine. The catalysed reaction is L-glutamate + acetyl-CoA = N-acetyl-L-glutamate + CoA + H(+). Its pathway is amino-acid biosynthesis; L-arginine biosynthesis; L-ornithine and N-acetyl-L-glutamate from L-glutamate and N(2)-acetyl-L-ornithine (cyclic): step 1/1. It participates in amino-acid biosynthesis; L-arginine biosynthesis; N(2)-acetyl-L-ornithine from L-glutamate: step 1/4. In terms of biological role, catalyzes two activities which are involved in the cyclic version of arginine biosynthesis: the synthesis of N-acetylglutamate from glutamate and acetyl-CoA as the acetyl donor, and of ornithine by transacetylation between N(2)-acetylornithine and glutamate. This is Arginine biosynthesis bifunctional protein ArgJ from Leptospira interrogans serogroup Icterohaemorrhagiae serovar Lai (strain 56601).